The primary structure comprises 157 residues: DNA-binding protein MNB1B (157 aa).

3 disordered regions span residues 1-45 (MKGA…KRAP), 59-87 (FKEK…SESD), and 109-157 (YNKG…DDDE). Composition is skewed to basic and acidic residues over residues 10-27 (AKAD…EKPA) and 76-87 (AGDRWKSLSESD). The segment at residues 41 to 110 (PKRAPSAFFV…EYNKAIAAYN (70 aa)) is a DNA-binding region (HMG box). Composition is skewed to acidic residues over residues 124-133 (EEEEEDEEES) and 141-157 (NDED…DDDE). Serine 149 bears the Phosphoserine; by CK2 mark.

Expressed in all tissues examined.

The protein resides in the nucleus. Recognizes an AAGG motif at the MNF1-binding site. This Zea mays (Maize) protein is DNA-binding protein MNB1B (MNB1B).